The chain runs to 326 residues: Glyoxylate/hydroxypyruvate reductase B (326 aa).

Catalysis depends on residues R237 and E266. Residue H285 is the Proton donor of the active site.

The protein belongs to the D-isomer specific 2-hydroxyacid dehydrogenase family. GhrB subfamily. As to quaternary structure, homodimer.

It localises to the cytoplasm. It carries out the reaction glycolate + NADP(+) = glyoxylate + NADPH + H(+). It catalyses the reaction (R)-glycerate + NAD(+) = 3-hydroxypyruvate + NADH + H(+). The catalysed reaction is (R)-glycerate + NADP(+) = 3-hydroxypyruvate + NADPH + H(+). Functionally, catalyzes the NADPH-dependent reduction of glyoxylate and hydroxypyruvate into glycolate and glycerate, respectively. The chain is Glyoxylate/hydroxypyruvate reductase B from Yersinia enterocolitica serotype O:8 / biotype 1B (strain NCTC 13174 / 8081).